Here is a 322-residue protein sequence, read N- to C-terminus: Nodulation protein Z (322 aa).

Residues 1 to 314 form the GT23 domain; that stretch reads MYNRYVLSRR…NDPSRLVVIE (314 aa).

The protein belongs to the glycosyltransferase 23 family.

Its function is as follows. Fucosyltransferase which adds the fucose moiety of the nod factor on its terminal reducing N-acetylglucosamine end. Uses GDP-fucose as the donor group. The polypeptide is Nodulation protein Z (nodZ) (Sinorhizobium fredii (strain NBRC 101917 / NGR234)).